The following is a 333-amino-acid chain: Flap endonuclease 1 (333 aa).

The interval 1-99 is N-domain; the sequence is MGVAIRDILA…ETINERREHR (99 aa). Residues Asp-28, Asp-81, Glu-153, Glu-155, Asp-174, Asp-176, and Asp-235 each contribute to the Mg(2+) site. An I-domain region spans residues 117 to 255; it reads EAYKQASASA…KTALKIVRNG (139 aa). Residues 325 to 333 are interaction with PCNA; sequence TQKTLDAWF.

Belongs to the XPG/RAD2 endonuclease family. FEN1 subfamily. Interacts with PCNA. PCNA stimulates the nuclease activity without altering cleavage specificity. It depends on Mg(2+) as a cofactor.

Structure-specific nuclease with 5'-flap endonuclease and 5'-3' exonuclease activities involved in DNA replication and repair. During DNA replication, cleaves the 5'-overhanging flap structure that is generated by displacement synthesis when DNA polymerase encounters the 5'-end of a downstream Okazaki fragment. Binds the unpaired 3'-DNA end and kinks the DNA to facilitate 5' cleavage specificity. Cleaves one nucleotide into the double-stranded DNA from the junction in flap DNA, leaving a nick for ligation. Also involved in the base excision repair (BER) pathway. Acts as a genome stabilization factor that prevents flaps from equilibrating into structures that lead to duplications and deletions. Also possesses 5'-3' exonuclease activity on nicked or gapped double-stranded DNA. In Methanoculleus marisnigri (strain ATCC 35101 / DSM 1498 / JR1), this protein is Flap endonuclease 1.